The primary structure comprises 955 residues: MAM domain-containing glycosylphosphatidylinositol anchor protein 1 (955 aa).

The N-terminal stretch at 1–18 (MEVTCLLLLALIPFHCRG) is a signal peptide. Ig-like domains are found at residues 24–123 (PAQA…KSIR) and 132–230 (PMLT…KAIT). N-linked (GlcNAc...) asparagine glycosylation is found at Asn42 and Asn90. Cystine bridges form between Cys60-Cys108 and Cys157-Cys214. 5 N-linked (GlcNAc...) asparagine glycosylation sites follow: Asn235, Asn247, Asn257, Asn307, and Asn331. An Ig-like 3 domain is found at 240-323 (PALKLSVNET…VGNPAKKTVN (84 aa)). The cysteines at positions 262 and 308 are disulfide-linked. 3 consecutive Ig-like domains span residues 338 to 432 (PDVI…VEVN), 440 to 532 (PTIS…AQVQ), and 539 to 631 (PEVE…FQVS). Cys357 and Cys415 are joined by a disulfide. A glycan (N-linked (GlcNAc...) asparagine) is linked at Asn432. 2 disulfides stabilise this stretch: Cys463-Cys514 and Cys560-Cys615. In terms of domain architecture, Fibronectin type-III spans 643 to 743 (TPNPTRSHKL…SRIIHYTEPI (101 aa)). N-linked (GlcNAc...) asparagine glycans are attached at residues Asn655 and Asn747. Residues 751–918 (NTCHFEDEKI…VTLKKGECPR (168 aa)) form the MAM domain. Polar residues predominate over residues 779–788 (LTQNPKRSPN). The interval 779-798 (LTQNPKRSPNTGPPTDISGT) is disordered. N-linked (GlcNAc...) asparagine glycosylation is present at Asn826. Ser932 carries GPI-anchor amidated serine lipidation. Residues 933-955 (GAPCQSSPQLWGPMAIFLLALQR) constitute a propeptide, removed in mature form.

As to quaternary structure, interacts heterophilically through its MAM domain with proteins in axon-rich regions and through its Ig-like domains with proteins in differentiating muscle. Interacts (through the Ig-like domains) with NLGN2. Has been found in brain, heart, skeletal muscle and kidney. Found to be overexpressed in tumor tissues.

The protein resides in the cell membrane. Required for radial migration of cortical neurons in the superficial layer of the neocortex. Plays a role in the formation or maintenance of inhibitory synapses. May function by inhibiting the activity of NLGN2. The sequence is that of MAM domain-containing glycosylphosphatidylinositol anchor protein 1 (MDGA1) from Homo sapiens (Human).